The sequence spans 483 residues: MGQFISFMQEIPIFLQEALNIALVAVSLICIVKGLVNLYRCGLFQLMVFLVLAGRSCSEETFKIGMHTQFQEVSLSLSALLTNQSHELPMLCLANKTHLYLKSGRSSFKINIDSVTVLTRSADVFVHSPKLGSCFESDEEWVVAWWIEAIGHRWDQDPGLLCRNKTKTEGKLIQINISRADGNVHYGWRLKNGLDHIYRGREEPCFEGEQCLIKIQPEDWPTDCKADHTNTFRFLSRSQKSIAVGRTLKAFFSWSLTDPLGNVPPGGYCLEKWMLVASELKCFGNTAIAKCNQNHDSEFCDMLRLFDYNKNAIKTLNEETKTRVNVLSHTINALISDNLLMKNKIRELMSVPYCNYTRFWYVNHTLSGQHSLPRCWMIRNNSYLNSSEFRNEWILESDFLISEMLSKEYSERQGRTPITLVDICFWSTVFFTSTLFLHLIGFPTHEHIRGEGCPLPHRLNSMGGCRCGKYLPLKKPTIWHRRH.

Residue glycine 2 is the site of N-myristoyl glycine; by host attachment. Residues 2 to 17 (GQFISFMQEIPIFLQE) lie on the Extracellular side of the membrane. The helical transmembrane segment at 18-32 (ALNIALVAVSLICIV) threads the bilayer. Lysine 33 is a topological domain (cytoplasmic). A helical transmembrane segment spans residues 34-53 (GLVNLYRCGLFQLMVFLVLA). Extracellular-side segments run 54 to 58 (GRSCS) and 59 to 422 (EETF…TLVD). Cysteine 57 serves as a coordination point for Zn(2+). Asparagine 83 and asparagine 95 each carry an N-linked (GlcNAc...) asparagine; by host glycan. 6 cysteine pairs are disulfide-bonded: cysteine 92–cysteine 224, cysteine 134–cysteine 162, cysteine 205–cysteine 211, cysteine 269–cysteine 282, cysteine 291–cysteine 300, and cysteine 354–cysteine 375. Asparagine 164 and asparagine 176 each carry an N-linked (GlcNAc...) asparagine; by host glycan. Asparagine 355, asparagine 363, asparagine 380, and asparagine 385 each carry an N-linked (GlcNAc...) asparagine; by host glycan. Residues 423-443 (ICFWSTVFFTSTLFLHLIGFP) traverse the membrane as a helical segment. Residues 444-483 (THEHIRGEGCPLPHRLNSMGGCRCGKYLPLKKPTIWHRRH) lie on the Cytoplasmic side of the membrane. Residues histidine 445, histidine 447, cysteine 453, histidine 457, cysteine 465, cysteine 467, and histidine 483 each coordinate Zn(2+).

This sequence belongs to the arenaviridae GPC protein family. Homotetramer; disulfide-linked. As to quaternary structure, homotetramer. GP2 homotetramers bind through ionic interactions with GP1 homotetramers to form the GP complex together with the stable signal peptide. The GP-C polyprotein interacts with the host protease MBTPS1/SKI-1 resulting in the polyprotein processing. Specific enzymatic cleavages in vivo yield mature proteins. GP-C polyprotein is cleaved in the endoplasmic reticulum by the host protease MBTPS1. Only cleaved glycoprotein is incorporated into virions. In terms of processing, the SSP remains stably associated with the GP complex following cleavage by signal peptidase and plays crucial roles in the trafficking of GP through the secretory pathway. Post-translationally, myristoylation is necessary for GP2-mediated fusion activity.

The protein localises to the virion membrane. Its subcellular location is the host endoplasmic reticulum membrane. It localises to the host Golgi apparatus membrane. It is found in the host cell membrane. Class I viral fusion protein that directs fusion of viral and host endosomal membranes, leading to delivery of the nucleocapsid into the cytoplasm. Membrane fusion is mediated by irreversible conformational changes induced upon acidification in the endosome. In terms of biological role, stable signal peptide (SSP): cleaved and functions as a signal peptide. In addition, it is also retained as the third component of the GP complex. The SSP is required for efficient glycoprotein expression, post-translational maturation cleavage of GP1 and GP2, glycoprotein transport to the cell surface plasma membrane, formation of infectious virus particles, and acid pH-dependent glycoprotein-mediated cell fusion. Functionally, interacts with the host receptor. This chain is Pre-glycoprotein polyprotein GP complex, found in Tacaribe virus (strain V5) (TCRV).